The sequence spans 783 residues: Endonuclease MutS2 (783 aa).

328–335 (GPNTGGKT) provides a ligand contact to ATP. The Smr domain occupies 708 to 783 (LDLRGKRYEE…GSGCTIATLG (76 aa)).

The protein belongs to the DNA mismatch repair MutS family. MutS2 subfamily. Homodimer. Binds to stalled ribosomes, contacting rRNA.

Endonuclease that is involved in the suppression of homologous recombination and thus may have a key role in the control of bacterial genetic diversity. In terms of biological role, acts as a ribosome collision sensor, splitting the ribosome into its 2 subunits. Detects stalled/collided 70S ribosomes which it binds and splits by an ATP-hydrolysis driven conformational change. Acts upstream of the ribosome quality control system (RQC), a ribosome-associated complex that mediates the extraction of incompletely synthesized nascent chains from stalled ribosomes and their subsequent degradation. Probably generates substrates for RQC. The protein is Endonuclease MutS2 of Streptococcus thermophilus (strain CNRZ 1066).